Reading from the N-terminus, the 289-residue chain is ATP synthase gamma chain (289 aa).

It belongs to the ATPase gamma chain family. F-type ATPases have 2 components, CF(1) - the catalytic core - and CF(0) - the membrane proton channel. CF(1) has five subunits: alpha(3), beta(3), gamma(1), delta(1), epsilon(1). CF(0) has three main subunits: a, b and c.

It localises to the cell inner membrane. Produces ATP from ADP in the presence of a proton gradient across the membrane. The gamma chain is believed to be important in regulating ATPase activity and the flow of protons through the CF(0) complex. The protein is ATP synthase gamma chain of Erwinia tasmaniensis (strain DSM 17950 / CFBP 7177 / CIP 109463 / NCPPB 4357 / Et1/99).